A 300-amino-acid polypeptide reads, in one-letter code: 33 kDa chaperonin (300 aa).

Disulfide bonds link Cys-247–Cys-249 and Cys-280–Cys-283.

This sequence belongs to the HSP33 family. Post-translationally, under oxidizing conditions two disulfide bonds are formed involving the reactive cysteines. Under reducing conditions zinc is bound to the reactive cysteines and the protein is inactive.

The protein localises to the cytoplasm. Redox regulated molecular chaperone. Protects both thermally unfolding and oxidatively damaged proteins from irreversible aggregation. Plays an important role in the bacterial defense system toward oxidative stress. The polypeptide is 33 kDa chaperonin (Prochlorococcus marinus (strain MIT 9312)).